The chain runs to 708 residues: MFPPSYDAFQGVTAIGWACANMAHHFGISLVMTQPITYLLQLQQLAKQGQTRFGCWLRGDAQWQHHLLKTLVPHFAEQPILMLGQTELEGVTCVDYRQGQQWLGRECQLLIVDLTQGWDANSFNAVLGTLVGGGLLLVVGEPTTLNHCARVWLERACHRLLVITPQTVPALPNSDSVTRTNTEQTYTEQRLAIDSIIKVVTGHRKRPLVLTADRGRGKTSALGLAAAELMSSRSMHIVVTAPTLAAVEPLFVHAQRTLPQAHRQRGEVQTAQSSLRFMAPDELLRTQPESDLLLVDEAAALPLPFLKRWVERYHRAVFSSTIHGYEGCGRGFSLKFQSWLQVQRPQMRSLHLEQPIRWAAGDALEQWQNQVFLLQSELPEVALEQAREPLSFSLFSQPECVEQPERLAQVFALLVNAHYQTSPNDLFALLQDEAMTLFVAYQGEVCVGCVLAVREGELDAPTIEAIQLGTRRPKGHLTPVTLANQLGISQAARQSCWRILRIAVHPDCQRQGIGSQLLTHFIAQHHADYYATSFGVSEDLLPFWLANHFVPIKLGSHRDQASGCYSLLMVRGEHLDWLEQAKQQFSAHWIFELSDSLQALEPQIIQQLLPSTVALPQPLIPLELIERYARGGANYESVAVWLYAWLLATAPSLESLSPLLISKILQRKSWAACAEQFQLSGKRQVEQAVRTEILALLVNLQCKYTLPI.

ATP contacts are provided by residues glutamine 189, 215-224 (GRGKTSALGL), and arginine 357. The 177-residue stretch at 398 to 574 (PECVEQPERL…YSLLMVRGEH (177 aa)) folds into the N-acetyltransferase domain. Acetyl-CoA-binding positions include 502-504 (IAV) and 509-515 (QRQGIGS).

The protein belongs to the RNA cytidine acetyltransferase family. TmcA subfamily.

The protein resides in the cytoplasm. It carries out the reaction cytidine(34) in elongator tRNA(Met) + acetyl-CoA + ATP + H2O = N(4)-acetylcytidine(34) in elongator tRNA(Met) + ADP + phosphate + CoA + H(+). In terms of biological role, catalyzes the formation of N(4)-acetylcytidine (ac(4)C) at the wobble position of tRNA(Met), by using acetyl-CoA as an acetyl donor and ATP (or GTP). The protein is tRNA(Met) cytidine acetyltransferase TmcA of Vibrio cholerae serotype O1 (strain ATCC 39315 / El Tor Inaba N16961).